The chain runs to 706 residues: MASSAQIHGLGTASFSSLKKPSSISGNSKTLFFGQRLNSNHSPFTRAAFPKLSSKTFKKGFTLRVVSEKVVGIDLGTTNSAVAAMEGGKPTIITNAEGQRTTPSVVAYTKNGDRLVGQIAKRQAVVNPENTFFSVKRFIGRKMSEVDEESKQVSYRVIRDDNGNVKLDCPAIGKSFAAEEISAQVLRKLVDDASKFLNDKVTKAVVTVPAYFNDSQRTATKDAGRIAGLEVLRIINEPTAASLAYGFERKNNETILVFDLGGGTFDVSVLEVGDGVFEVLSTSGDTHLGGDDFDKRVVDWLAGDFKRDEGIDLLKDKQALQRLTETAEKAKMELSSLSQTNISLPFITATADGPKHIETTLTRAKFEELCSDLLDRLRTPVENSLRDAKLSIKDIDEVILVGGSTRIPAVQELVKKLIGKDPNVTVNPDEVVALGAAVQAGVLAGDVSDIVLLDVSPLSLGLETLGGVMTKIIPRNTTLPTSKSEVFSTAADGQTSVEINVLQGEREFVRDNKSLGSFRLDGIPPAPRGVPQIEVKFDIDANGILSVAAIDKGTGKKQDITITGASTLPGDEVERMVSEAERFSKEDKEKREAIDTKNQADSVVYQTEKQLKELGEKVPAPVKEKVEAKLGELKEAITGGSTQTIKDALAALNQEVMQLGQSLYNQPGAAGQAGPTPPGSESGPSESSGKEGPEGDVIDADFTDSK.

A chloroplast-targeting transit peptide spans 1–67 (MASSAQIHGL…KKGFTLRVVS (67 aa)). The interval 663 to 706 (LYNQPGAAGQAGPTPPGSESGPSESSGKEGPEGDVIDADFTDSK) is disordered. Residues 666–687 (QPGAAGQAGPTPPGSESGPSES) show a composition bias toward low complexity. Residues 694 to 706 (EGDVIDADFTDSK) are compositionally biased toward acidic residues.

It belongs to the heat shock protein 70 family.

It localises to the plastid. The protein resides in the chloroplast stroma. Interacts with newly imported chloroplast proteins to assist in their maturation. The protein is Stromal 70 kDa heat shock-related protein, chloroplastic (HSP70) of Pisum sativum (Garden pea).